The chain runs to 65 residues: Photosystem II reaction center protein J (65 aa).

Over residues 1 to 17 the composition is skewed to basic and acidic residues; it reads MSTKLKGPDGRIPDRLP. Residues 1–21 are disordered; sequence MSTKLKGPDGRIPDRLPDGSP. The chain crosses the membrane as a helical span at residues 36 to 56; the sequence is LWLVATVGGMAVLSVLGLFFF.

The protein belongs to the PsbJ family. In terms of assembly, PSII is composed of 1 copy each of membrane proteins PsbA, PsbB, PsbC, PsbD, PsbE, PsbF, PsbH, PsbI, PsbJ, PsbK, PsbL, PsbM, PsbT, PsbX, PsbY, Psb30/Ycf12, peripheral proteins PsbO, CyanoQ (PsbQ), PsbU, PsbV and a large number of cofactors. It forms dimeric complexes.

The protein localises to the cellular thylakoid membrane. One of the components of the core complex of photosystem II (PSII). PSII is a light-driven water:plastoquinone oxidoreductase that uses light energy to abstract electrons from H(2)O, generating O(2) and a proton gradient subsequently used for ATP formation. It consists of a core antenna complex that captures photons, and an electron transfer chain that converts photonic excitation into a charge separation. The polypeptide is Photosystem II reaction center protein J (Prochlorococcus marinus (strain MIT 9313)).